We begin with the raw amino-acid sequence, 309 residues long: Porphobilinogen deaminase (309 aa).

Position 241 is an S-(dipyrrolylmethanemethyl)cysteine (C241).

This sequence belongs to the HMBS family. Monomer. Requires dipyrromethane as cofactor.

The catalysed reaction is 4 porphobilinogen + H2O = hydroxymethylbilane + 4 NH4(+). It functions in the pathway porphyrin-containing compound metabolism; protoporphyrin-IX biosynthesis; coproporphyrinogen-III from 5-aminolevulinate: step 2/4. Its function is as follows. Tetrapolymerization of the monopyrrole PBG into the hydroxymethylbilane pre-uroporphyrinogen in several discrete steps. This Bacillus cereus (strain B4264) protein is Porphobilinogen deaminase.